The chain runs to 317 residues: Ribonuclease 3-like protein 2 (317 aa).

The segment at 1-26 (MAPPPAMKPASRKRGPPAPDPVELPP) is disordered. Over residues 16 to 26 (PPAPDPVELPP) the composition is skewed to pro residues. One can recognise an RNase III domain in the interval 37–185 (AARVERLLRY…IAAAVYVDCK (149 aa)). Mg(2+) is bound by residues Glu-74, Asp-171, and Glu-174. Residues 211-274 (QPVTMLHELC…ARDATRKLAG (64 aa)) enclose the DRBM domain.

The cofactor is Mg(2+). Mn(2+) serves as cofactor.

Its function is as follows. Cleaves double-stranded RNA (dsRNA). This is Ribonuclease 3-like protein 2 from Oryza sativa subsp. japonica (Rice).